Consider the following 1342-residue polypeptide: DNA-directed RNA polymerase subunit beta (1342 aa).

Belongs to the RNA polymerase beta chain family. As to quaternary structure, the RNAP catalytic core consists of 2 alpha, 1 beta, 1 beta' and 1 omega subunit. When a sigma factor is associated with the core the holoenzyme is formed, which can initiate transcription.

The enzyme catalyses RNA(n) + a ribonucleoside 5'-triphosphate = RNA(n+1) + diphosphate. Functionally, DNA-dependent RNA polymerase catalyzes the transcription of DNA into RNA using the four ribonucleoside triphosphates as substrates. The protein is DNA-directed RNA polymerase subunit beta of Aeromonas salmonicida (strain A449).